Reading from the N-terminus, the 201-residue chain is Recombination protein RecR (201 aa).

A C4-type zinc finger spans residues 57–74 (CRICGFITSKDDDPCVIC). The region spanning 82–178 (SKIFVVENSQ…KVTRLARGLS (97 aa)) is the Toprim domain.

This sequence belongs to the RecR family.

In terms of biological role, may play a role in DNA repair. It seems to be involved in an RecBC-independent recombinational process of DNA repair. It may act with RecF and RecO. This is Recombination protein RecR from Oenococcus oeni (strain ATCC BAA-331 / PSU-1).